Reading from the N-terminus, the 341-residue chain is Phosphate acyltransferase (341 aa).

It belongs to the PlsX family. As to quaternary structure, homodimer. Probably interacts with PlsY.

Its subcellular location is the cytoplasm. The enzyme catalyses a fatty acyl-[ACP] + phosphate = an acyl phosphate + holo-[ACP]. It functions in the pathway lipid metabolism; phospholipid metabolism. Functionally, catalyzes the reversible formation of acyl-phosphate (acyl-PO(4)) from acyl-[acyl-carrier-protein] (acyl-ACP). This enzyme utilizes acyl-ACP as fatty acyl donor, but not acyl-CoA. This is Phosphate acyltransferase from Vibrio vulnificus (strain CMCP6).